Consider the following 416-residue polypeptide: UDP-N-acetylglucosamine 1-carboxyvinyltransferase (416 aa).

A phosphoenolpyruvate-binding site is contributed by 22–23 (KN). Residue Arg-92 coordinates UDP-N-acetyl-alpha-D-glucosamine. Cys-116 functions as the Proton donor in the catalytic mechanism. Cys-116 carries the post-translational modification 2-(S-cysteinyl)pyruvic acid O-phosphothioketal. 2 residues coordinate UDP-N-acetyl-alpha-D-glucosamine: Asp-306 and Ile-328.

This sequence belongs to the EPSP synthase family. MurA subfamily.

It localises to the cytoplasm. It carries out the reaction phosphoenolpyruvate + UDP-N-acetyl-alpha-D-glucosamine = UDP-N-acetyl-3-O-(1-carboxyvinyl)-alpha-D-glucosamine + phosphate. The protein operates within cell wall biogenesis; peptidoglycan biosynthesis. In terms of biological role, cell wall formation. Adds enolpyruvyl to UDP-N-acetylglucosamine. The sequence is that of UDP-N-acetylglucosamine 1-carboxyvinyltransferase from Buchnera aphidicola subsp. Baizongia pistaciae (strain Bp).